The chain runs to 418 residues: ML-236A carboxylate methylbutanoyltransferase mlcH (418 aa).

Arginine 78 provides a ligand contact to monacolin J. Serine 81 serves as the catalytic Acyl-ester intermediate. Monacolin J is bound by residues arginine 178, tyrosine 193, and tyrosine 262. Position 370 (glycine 370) interacts with 2-methylbutanoate.

It belongs to the class-A beta-lactamase family.

The catalysed reaction is ML-236A carboxylate + (S)-2-methylbutanoyl-[2-methylbutanoate polyketide synthase] = mevinic carboxylate + holo-[2-methylbutanoate polyketide synthase]. It participates in polyketide biosynthesis. In terms of biological role, compactin diketide synthase; part of the gene cluster that mediates the biosynthesis of compactin, also known as mevastatin or ML-236B, and which acts as a potent competitive inhibitor of HMG-CoA reductase. Compactin biosynthesis is performed in two stages. The first stage is catalyzed by the nonaketide synthase mlcA, which belongs to type I polyketide synthases and catalyzes the iterative nine-step formation of the polyketide. This PKS stage is completed by the action of dehydrogenase mlcG, which catalyzes the NADPH-dependent reduction of the unsaturated tetra-, penta- and heptaketide intermediates that arise during the mlcA-mediated biosynthesis of the nonaketide chain and leads to dihydro-ML-236C carboxylate. Covalently bound dihydro-ML-236C carboxylate is released from mlcA by the mlcF esterase. Conversion of dihydro-ML-236C carboxylate into ML-236A carboxylate is subsequently performed with the participation of molecular oxygen and P450 monoogygenase mlcC. Finally, mlcH performs the conversion of ML-236A carboxylate to ML-236B/compactin carboxylate through the addition of the side-chain diketide moiety produced by the diketide synthase mlcB. In Penicillium citrinum, this protein is ML-236A carboxylate methylbutanoyltransferase mlcH.